A 215-amino-acid polypeptide reads, in one-letter code: uncharacterized protein (215 aa).

The first 17 residues, 1–17 (MKKVLASATILSLMLVG), serve as a signal peptide directing secretion. The interval 17 to 110 (GCSNGGNDES…NKQQQSVQDN (94 aa)) is disordered. A lipid anchor (N-palmitoyl cysteine) is attached at C18. C18 is lipidated: S-diacylglycerol cysteine. A compositionally biased stretch (basic and acidic residues) spans 25-62 (ESSHKDDSSKTEQKDKSSSQHDSKKDSKRNDTNNKQDN). 2 stretches are compositionally biased toward low complexity: residues 63-76 (QENNTNKEQTNNQN) and 91-110 (NSNGNSSDNQNKQQQSVQDN).

Its subcellular location is the cell membrane. This is an uncharacterized protein from Staphylococcus epidermidis (strain ATCC 35984 / DSM 28319 / BCRC 17069 / CCUG 31568 / BM 3577 / RP62A).